The primary structure comprises 90 residues: UPF0386 protein Rru_A2144 (90 aa).

Belongs to the UPF0386 family.

This chain is UPF0386 protein Rru_A2144, found in Rhodospirillum rubrum (strain ATCC 11170 / ATH 1.1.1 / DSM 467 / LMG 4362 / NCIMB 8255 / S1).